The following is a 220-amino-acid chain: MOB kinase activator-like 3 (220 aa).

Zn(2+) is bound by residues cysteine 83, cysteine 88, histidine 165, and histidine 170.

Belongs to the MOB1/phocein family.

The chain is MOB kinase activator-like 3 (Mob3) from Drosophila melanogaster (Fruit fly).